The following is a 157-amino-acid chain: Protein Smg (157 aa).

The protein belongs to the Smg family.

In Salmonella agona (strain SL483), this protein is Protein Smg.